The primary structure comprises 385 residues: Prepilin peptidase EppA (385 aa).

Helical transmembrane passes span 1-21, 29-49, 58-78, 80-100, 104-124, 126-146, 166-186, 187-207, 231-251, and 358-378; these read MILM…CFYA, GIIP…LNGA, WIFI…YILW, MVAW…LLPF, LVSY…PFPL, VIIN…FFII, TSMV…LITD, FLPF…TMVI, FELT…IQLI, and PAIF…MILF.

Belongs to the peptidase A24 family.

The protein localises to the cell membrane. Peptidase that processes the N-terminus of prepilins. In Methanothermobacter thermautotrophicus (strain ATCC 29096 / DSM 1053 / JCM 10044 / NBRC 100330 / Delta H) (Methanobacterium thermoautotrophicum), this protein is Prepilin peptidase EppA.